A 374-amino-acid chain; its full sequence is MKRQNVRTLSLIVCTFTYLLVGAAVFDALESDHEMREEEKLKAEEIRIKGKYNISSEDYRQLELVILQSEPHRAGVQWKFAGSFYFAITVITTIGYGHAAPGTDAGKAFCMFYAVLGIPLTLVMFQSLGERMNTFVRYLLKRIKKCCGMRNTDVSMENMVTVGFFSCMGTLCIGAAAFSQCEEWSFFHAYYYCFITLTTIGFGDYVALQTKGALQKKPLYVAFSFMYILVGLTVIGAFLNLVVLRFLTMNSEDERRDAEERASLAGNRNSMVIHIPEEPRPSRPRYKADVPDLQSVCSCTCYRSQDYGGRSVAPQNSFSAKLAPHYFHSISYKIEEISPSTLKNSLFPSPISSISPGLHSFTDHQRLMKRRKSV.

The Cytoplasmic segment spans residues 1–8 (MKRQNVRT). The chain crosses the membrane as a helical span at residues 9-29 (LSLIVCTFTYLLVGAAVFDAL). At 30 to 88 (ESDHEMREEEKLKAEEIRIKGKYNISSEDYRQLELVILQSEPHRAGVQWKFAGSFYFAI) the chain is on the extracellular side. A glycan (N-linked (GlcNAc...) asparagine) is linked at N53. The segment at residues 89 to 101 (TVITTIGYGHAAP) is an intramembrane region (pore-forming). Residues T93, I94, G95, and Y96 each coordinate K(+). The segment at 93-98 (TIGYGH) is selectivity filter 1. The Extracellular segment spans residues 102-107 (GTDAGK). A helical transmembrane segment spans residues 108–128 (AFCMFYAVLGIPLTLVMFQSL). At 129-158 (GERMNTFVRYLLKRIKKCCGMRNTDVSMEN) the chain is on the cytoplasmic side. The chain crosses the membrane as a helical span at residues 159–179 (MVTVGFFSCMGTLCIGAAAFS). At 180–194 (QCEEWSFFHAYYYCF) the chain is on the extracellular side. An intramembrane region (pore-forming) is located at residues 195-207 (ITLTTIGFGDYVA). Positions 199, 200, 201, and 202 each coordinate K(+). The segment at 199 to 204 (TIGFGD) is selectivity filter 2. The Extracellular segment spans residues 208-218 (LQTKGALQKKP). A helical transmembrane segment spans residues 219–239 (LYVAFSFMYILVGLTVIGAFL). Residues 240–374 (NLVVLRFLTM…QRLMKRRKSV (135 aa)) are Cytoplasmic-facing. The segment at 243-248 (VLRFLT) is X-gate.

Belongs to the two pore domain potassium channel (TC 1.A.1.8) family. In terms of assembly, homodimer. Heterodimer with KCNK1. Heterodimer with KCNK3. As to expression, mainly found in the cerebellum. Also found in adrenal gland, kidney and lung.

The protein localises to the cell membrane. Its subcellular location is the mitochondrion inner membrane. It localises to the cell projection. The protein resides in the dendrite. The enzyme catalyses K(+)(in) = K(+)(out). It carries out the reaction Na(+)(in) = Na(+)(out). Inhibited by extracellular acidification adopting a nonconductive conformation at pH 6.0. Inhibited by phorbol 12-myristate 13-acetate (PMA). Its function is as follows. K(+) channel that conducts voltage-dependent outward rectifying currents upon membrane depolarization. Voltage sensing is coupled to K(+) electrochemical gradient in an 'ion flux gating' mode where outward but not inward ion flow opens the gate. Changes ion selectivity and becomes permeable to Na(+) ions in response to extracellular acidification. Protonation of the pH sensor His-98 stabilizes C-type inactivation conformation likely converting the channel from outward K(+)-conducting, to inward Na(+)-conducting to nonconductive state. Homo- and heterodimerizes to form functional channels with distinct regulatory and gating properties. Allows K(+) currents with fast-gating kinetics important for the repolarization and hyperpolarization phases of action potentials. In granule neurons, hyperpolarizes the resting membrane potential to limit intrinsic neuronal excitability, but once the action potential threshold is reached, supports high-frequency action potential firing and increased neuronal excitability. Homomeric and/or heteromeric KCNK3:KCNK9 channels operate in cerebellar granule cells, whereas heteromeric KCNK1:KCNK9 enables currents in hippocampal dentate gyrus granule neurons. Dispensable for central chemosensory respiration i.e. breathing controlled by brainstem CO2/pH, it rather conducts pH-sensitive currents and controls the firing rate of serotonergic raphe neurons involved in potentiation of the respiratory chemoreflex. In retinal ganglion cells, mediates outward currents that regulate action potentials in response to acidification of the synaptic cleft. Involved in transmission of image-forming and nonimage-forming visual information in the retina. In adrenal gland, contributes to the maintenance of a hyperpolarized resting membrane potential of aldosterone-producing cells at zona glomerulosa and limits aldosterone release as part of a regulatory mechanism that controls arterial blood pressure and electrolyte homeostasis. The chain is Potassium channel subfamily K member 9 from Homo sapiens (Human).